Consider the following 308-residue polypeptide: Dioxygenase peniF (308 aa).

Fe cation is bound by residues His144 and His225.

Belongs to the PhyH family. In terms of assembly, homodimer. Fe cation is required as a cofactor.

Its function is as follows. Dioxygenase; part of the gene cluster that mediates the biosynthesis of penifulvin A, a potent insecticidal sesquiterpene that features a [5.5.5.6]dioxafenestrane ring. The first step of the pathway is performed by the sesquiterpene cyclase peniA that generates the angular triquinane scaffold silphinene via cyclization of the linear farnesyl pyrophosphate (FPP). The cytochrome P450 monooxygenase peniB and the flavin-dependent monooxygenase peniC then catalyze a series of oxidation reactions to transform silphinene into penifulvin A. The dioxygenases peniD and peniF, as well as the acetyltransferase peniE, do not seem to be involved in the biosynthesis of penifulvin A. The chain is Dioxygenase peniF from Penicillium patulum (Penicillium griseofulvum).